The sequence spans 565 residues: NAD-dependent malic enzyme (565 aa).

The Proton donor role is filled by tyrosine 104. Residue arginine 157 participates in NAD(+) binding. Lysine 175 (proton acceptor) is an active-site residue. The a divalent metal cation site is built by glutamate 246, aspartate 247, and aspartate 270. NAD(+)-binding residues include aspartate 270 and asparagine 418.

Belongs to the malic enzymes family. In terms of assembly, homotetramer. The cofactor is Mg(2+). Requires Mn(2+) as cofactor.

It catalyses the reaction (S)-malate + NAD(+) = pyruvate + CO2 + NADH. The enzyme catalyses oxaloacetate + H(+) = pyruvate + CO2. This chain is NAD-dependent malic enzyme, found in Serratia proteamaculans (strain 568).